Here is a 20-residue protein sequence, read N- to C-terminus: Maximin-Hu (20 aa).

It belongs to the bombinin family. Expressed by the skin glands.

It localises to the secreted. In terms of biological role, has antimicrobial activity. The protein is Maximin-Hu of Bombina maxima (Giant fire-bellied toad).